Consider the following 46-residue polypeptide: GTP cyclohydrolase 1 (46 aa).

Position 7 (cysteine 7) interacts with Zn(2+).

It belongs to the GTP cyclohydrolase I family. Homomer.

The catalysed reaction is GTP + H2O = 7,8-dihydroneopterin 3'-triphosphate + formate + H(+). Its pathway is cofactor biosynthesis; 7,8-dihydroneopterin triphosphate biosynthesis; 7,8-dihydroneopterin triphosphate from GTP: step 1/1. This chain is GTP cyclohydrolase 1 (folE), found in Bacillus pumilus (Bacillus mesentericus).